Reading from the N-terminus, the 125-residue chain is UPF0231 protein HD_1708 (125 aa).

Belongs to the UPF0231 family.

The sequence is that of UPF0231 protein HD_1708 from Haemophilus ducreyi (strain 35000HP / ATCC 700724).